We begin with the raw amino-acid sequence, 430 residues long: C4-dicarboxylate transport protein (430 aa).

The next 8 helical transmembrane spans lie at 9 to 29 (VLYV…HFYP), 45 to 65 (LIKM…IAGM), 79 to 99 (LLYF…ATHL), 149 to 169 (GEIL…AHLG), 185 to 205 (VLFG…FGAM), 223 to 243 (LIGT…GAIA), 308 to 328 (IYMT…LTWM), and 356 to 376 (AATL…ILGI).

It belongs to the dicarboxylate/amino acid:cation symporter (DAACS) (TC 2.A.23) family.

It is found in the cell inner membrane. Responsible for the transport of dicarboxylates such as succinate, fumarate, and malate from the periplasm across the membrane. The chain is C4-dicarboxylate transport protein from Burkholderia orbicola (strain AU 1054).